A 127-amino-acid polypeptide reads, in one-letter code: MLQLLLAVFIGGGTGSVARWLLSMRFNPLHQAIPLGTLTANLIGAFIIGMGFAWFSRMTNIDPVWKVLITTGFCGGLTTFSTFSAEVVFLLQEGRFGWTLLNVFVNLLGSFAMTALAFWLFSASTAH.

4 consecutive transmembrane segments (helical) span residues 4-24 (LLLA…LLSM), 35-55 (LGTL…FAWF), 71-91 (TGFC…VFLL), and 103-123 (VFVN…LFSA). Residues G75 and T78 each contribute to the Na(+) site.

It belongs to the fluoride channel Fluc/FEX (TC 1.A.43) family.

It localises to the cell inner membrane. The catalysed reaction is fluoride(in) = fluoride(out). Na(+) is not transported, but it plays an essential structural role and its presence is essential for fluoride channel function. Fluoride-specific ion channel. Important for reducing fluoride concentration in the cell, thus reducing its toxicity. In Escherichia coli O7:K1 (strain IAI39 / ExPEC), this protein is Fluoride-specific ion channel FluC.